A 1137-amino-acid polypeptide reads, in one-letter code: DNA mismatch repair protein Msh3 (1137 aa).

2 stretches are compositionally biased toward low complexity: residues threonine 31–glycine 42 and alanine 51–alanine 62. Disordered stretches follow at residues threonine 31–lysine 122 and serine 201–asparagine 222. Position 33 is a phosphoserine (serine 33). Residues proline 63–proline 76 are compositionally biased toward pro residues. The interaction with EXO1 stretch occupies residues leucine 75–leucine 297. The segment covering threonine 81 to valine 97 has biased composition (basic and acidic residues). Residues serine 201–serine 220 are compositionally biased toward polar residues. Glycine 896–serine 903 is a binding site for ATP. At threonine 1099 the chain carries Phosphothreonine.

The protein belongs to the DNA mismatch repair MutS family. MSH3 subfamily. Component of the DNA mismatch repair (MMR) complex composed at least of MSH2, MSH3, MSH6, PMS1 and MLH1. Heterodimer consisting of MSH2-MSH3 (MutS beta). Forms a ternary complex with MutL alpha (MLH1-PMS1). Interacts with EXO1. Interacts with MCM9.

In terms of biological role, component of the post-replicative DNA mismatch repair system (MMR). Heterodimerizes with MSH2 to form MutS beta which binds to DNA mismatches thereby initiating DNA repair. When bound, the MutS beta heterodimer bends the DNA helix and shields approximately 20 base pairs. MutS beta recognizes large insertion-deletion loops (IDL) up to 13 nucleotides long. After mismatch binding, forms a ternary complex with the MutL alpha heterodimer, which is thought to be responsible for directing the downstream MMR events, including strand discrimination, excision, and resynthesis. This chain is DNA mismatch repair protein Msh3 (MSH3), found in Homo sapiens (Human).